A 201-amino-acid polypeptide reads, in one-letter code: Recombination protein RecR (201 aa).

Residues 57-74 (CRICGNITENSVNPCAIC) form a C4-type zinc finger. In terms of domain architecture, Toprim spans 82-178 (STVFVVENSR…KVTRLAHGLA (97 aa)).

It belongs to the RecR family.

Functionally, may play a role in DNA repair. It seems to be involved in an RecBC-independent recombinational process of DNA repair. It may act with RecF and RecO. This chain is Recombination protein RecR, found in Leuconostoc citreum (strain KM20).